The chain runs to 1375 residues: Probable GMP synthase [glutamine-hydrolyzing] (1375 aa).

In terms of domain architecture, Glutamine amidotransferase type-1; first part spans 7–119 (QILVLDFGSQ…VLEIMESSQD (113 aa)). The active-site Nucleophile is Cys-84. An insert-1 region spans residues 120-500 (SKDSSCFAFQ…NNATQGFKSC (381 aa)). N-acetyltransferase domains follow at residues 141–300 (LSFD…KALE) and 318–484 (VFLR…LEKK). The Glutamine amidotransferase type-1; second part domain maps to 501–580 (SLFKGIKQDS…AVGICGANTC (80 aa)). Active-site residues include His-554 and Glu-556. Residues 597–1071 (IVYGGKAHCE…SGVANSLKIT (475 aa)) are insert-2. The N-acetyltransferase 3 domain occupies 612 to 765 (MQIQEAFKHI…ELIPLSIARE (154 aa)). Residues 1011 to 1036 (RIVDSQHTESSDIKGQSHLESSADSG) form a disordered region. The segment covering 1014 to 1027 (DSQHTESSDIKGQS) has biased composition (basic and acidic residues). Residues 1055–1250 (YLEGNDRSGV…LGMPESMLMR (196 aa)) form the GMPS ATP-PPase domain. Position 1083-1089 (1083-1089 (SGGVDSS)) interacts with ATP.

In terms of assembly, homodimer.

It carries out the reaction XMP + L-glutamine + ATP + H2O = GMP + L-glutamate + AMP + diphosphate + 2 H(+). Its pathway is purine metabolism; GMP biosynthesis; GMP from XMP (L-Gln route): step 1/1. In terms of biological role, catalyzes the synthesis of GMP from XMP. This is Probable GMP synthase [glutamine-hydrolyzing] (guaA) from Helicobacter hepaticus (strain ATCC 51449 / 3B1).